A 391-amino-acid chain; its full sequence is GTPase Obg (391 aa).

The region spanning 1 to 159 (MKFIDEALIR…RDLQLELMLL (159 aa)) is the Obg domain. The 174-residue stretch at 160–333 (ADVGMLGLPN…LTRDIMDFIE (174 aa)) folds into the OBG-type G domain. GTP-binding positions include 166–173 (GLPNAGKS), 191–195 (FTTLV), 213–216 (DIPG), 283–286 (NKID), and 314–316 (SAA). Residues serine 173 and threonine 193 each coordinate Mg(2+). A disordered region spans residues 361–391 (QNPITEDDWDDLDDDGWTEEDDEGVEFIYKP). Residues 365 to 385 (TEDDWDDLDDDGWTEEDDEGV) are compositionally biased toward acidic residues.

This sequence belongs to the TRAFAC class OBG-HflX-like GTPase superfamily. OBG GTPase family. As to quaternary structure, monomer. Mg(2+) serves as cofactor.

Its subcellular location is the cytoplasm. Functionally, an essential GTPase which binds GTP, GDP and possibly (p)ppGpp with moderate affinity, with high nucleotide exchange rates and a fairly low GTP hydrolysis rate. Plays a role in control of the cell cycle, stress response, ribosome biogenesis and in those bacteria that undergo differentiation, in morphogenesis control. The polypeptide is GTPase Obg (Glaesserella parasuis serovar 5 (strain SH0165) (Haemophilus parasuis)).